A 344-amino-acid polypeptide reads, in one-letter code: Phenylalanine--tRNA ligase alpha subunit (344 aa).

Glu259 contacts Mg(2+).

The protein belongs to the class-II aminoacyl-tRNA synthetase family. Phe-tRNA synthetase alpha subunit type 1 subfamily. As to quaternary structure, tetramer of two alpha and two beta subunits. Requires Mg(2+) as cofactor.

Its subcellular location is the cytoplasm. It catalyses the reaction tRNA(Phe) + L-phenylalanine + ATP = L-phenylalanyl-tRNA(Phe) + AMP + diphosphate + H(+). The protein is Phenylalanine--tRNA ligase alpha subunit of Petrotoga mobilis (strain DSM 10674 / SJ95).